The following is a 919-amino-acid chain: Puromycin-sensitive aminopeptidase (919 aa).

Substrate-binding positions include E180 and 316–320 (GAMEN). H352 lines the Zn(2+) pocket. The active-site Proton acceptor is E353. H356 and E375 together coordinate Zn(2+). The residue at position 464 (Y464) is a 3'-nitrotyrosine. The Nuclear localization signal motif lies at 726 to 730 (RRRFK).

This sequence belongs to the peptidase M1 family. As to quaternary structure, monomer. Requires Zn(2+) as cofactor. In terms of tissue distribution, detected in liver, epithelium of renal tubules, epithelium of small and large intestine, gastric epithelial cells, and alveoli of the lung (at protein level).

Its subcellular location is the cytoplasm. It localises to the cytosol. The protein resides in the nucleus. It catalyses the reaction Release of an N-terminal amino acid, preferentially alanine, from a wide range of peptides, amides and arylamides.. Strongly inhibited by bestatin, leuhistin, actinonin, amastatin, 1,10-phenanthroline, DFP, PCMBS, Zn(2+), Cd(2+), Co(2+), Cu(2+), Hg(2+), EDTA and puromycin. Not inhibited by PMSF, and only slightly inhibited by leupeptin and aprotinin. Activity is increased by Mg(2+) and Ca(2+). Aminopeptidase with broad substrate specificity for several peptides. Involved in proteolytic events essential for cell growth and viability. May act as regulator of neuropeptide activity. Plays a role in the antigen-processing pathway for MHC class I molecules. Involved in the N-terminal trimming of cytotoxic T-cell epitope precursors. Digests the poly-Q peptides found in many cellular proteins. Digests tau from normal brain more efficiently than tau from Alzheimer disease brain. The protein is Puromycin-sensitive aminopeptidase (NPEPPS) of Homo sapiens (Human).